A 229-amino-acid polypeptide reads, in one-letter code: MTIGIIGAMDEEIALLKQQMKDMEELEVAGCYFYTGHLHDKSVVLLLSGIGKVNAAMATTILHERFSPSMIINTGSAGGFASDLQVGDVVISEEVLHHDVDATAFDYVYGQVPGMPATYKADQRLVELSSEVMKDIEINSRIGVIATGDSFMQRKDQTDIVKQRFPGMLALEMEAASIAQVCYRYNTPFVITRALSDIAGQESSVSFDQFLQTAGKNAAQLIINMVKKI.

The Proton acceptor role is filled by Glu12. Residues Gly78, Met152, and 173–174 (ME) contribute to the substrate site. Residue Asp197 is the Proton donor of the active site.

Belongs to the PNP/UDP phosphorylase family. MtnN subfamily.

It carries out the reaction S-adenosyl-L-homocysteine + H2O = S-(5-deoxy-D-ribos-5-yl)-L-homocysteine + adenine. The enzyme catalyses S-methyl-5'-thioadenosine + H2O = 5-(methylsulfanyl)-D-ribose + adenine. The catalysed reaction is 5'-deoxyadenosine + H2O = 5-deoxy-D-ribose + adenine. It participates in amino-acid biosynthesis; L-methionine biosynthesis via salvage pathway; S-methyl-5-thio-alpha-D-ribose 1-phosphate from S-methyl-5'-thioadenosine (hydrolase route): step 1/2. Catalyzes the irreversible cleavage of the glycosidic bond in both 5'-methylthioadenosine (MTA) and S-adenosylhomocysteine (SAH/AdoHcy) to adenine and the corresponding thioribose, 5'-methylthioribose and S-ribosylhomocysteine, respectively. Also cleaves 5'-deoxyadenosine, a toxic by-product of radical S-adenosylmethionine (SAM) enzymes, into 5-deoxyribose and adenine. This Oceanobacillus iheyensis (strain DSM 14371 / CIP 107618 / JCM 11309 / KCTC 3954 / HTE831) protein is 5'-methylthioadenosine/S-adenosylhomocysteine nucleosidase.